We begin with the raw amino-acid sequence, 364 residues long: Aminomethyltransferase (364 aa).

This sequence belongs to the GcvT family. In terms of assembly, the glycine cleavage system is composed of four proteins: P, T, L and H.

The enzyme catalyses N(6)-[(R)-S(8)-aminomethyldihydrolipoyl]-L-lysyl-[protein] + (6S)-5,6,7,8-tetrahydrofolate = N(6)-[(R)-dihydrolipoyl]-L-lysyl-[protein] + (6R)-5,10-methylene-5,6,7,8-tetrahydrofolate + NH4(+). Its function is as follows. The glycine cleavage system catalyzes the degradation of glycine. The protein is Aminomethyltransferase of Shigella flexneri serotype 5b (strain 8401).